We begin with the raw amino-acid sequence, 418 residues long: S-adenosylmethionine synthase (418 aa).

Histidine 16 is a binding site for ATP. Position 18 (aspartate 18) interacts with Mg(2+). Residue glutamate 44 coordinates K(+). Residues glutamate 57 and glutamine 100 each coordinate L-methionine. The segment at 100–110 (QSPDIAQGVDS) is flexible loop. Residues 174–176 (DGK), aspartate 259, 265–266 (RK), alanine 282, and lysine 286 each bind ATP. Aspartate 259 lines the L-methionine pocket. Lysine 290 provides a ligand contact to L-methionine.

The protein belongs to the AdoMet synthase family. In terms of assembly, homotetramer; dimer of dimers. Mg(2+) serves as cofactor. Requires K(+) as cofactor.

The protein resides in the cytoplasm. The catalysed reaction is L-methionine + ATP + H2O = S-adenosyl-L-methionine + phosphate + diphosphate. Its pathway is amino-acid biosynthesis; S-adenosyl-L-methionine biosynthesis; S-adenosyl-L-methionine from L-methionine: step 1/1. In terms of biological role, catalyzes the formation of S-adenosylmethionine (AdoMet) from methionine and ATP. The overall synthetic reaction is composed of two sequential steps, AdoMet formation and the subsequent tripolyphosphate hydrolysis which occurs prior to release of AdoMet from the enzyme. The polypeptide is S-adenosylmethionine synthase (Acaryochloris marina (strain MBIC 11017)).